Here is a 100-residue protein sequence, read N- to C-terminus: MDLTPREKDKLLIFTAGLVAERRLARGVKLNYPEAMAYISAALLEGARDGQTVAELMHYGTTLLSRDQVMEGIAEMIPEIQVEATFPDGTKLVTVHQPIA.

This sequence belongs to the urease gamma subunit family. As to quaternary structure, heterotrimer of UreA (gamma), UreB (beta) and UreC (alpha) subunits. Three heterotrimers associate to form the active enzyme.

The protein resides in the cytoplasm. It catalyses the reaction urea + 2 H2O + H(+) = hydrogencarbonate + 2 NH4(+). Its pathway is nitrogen metabolism; urea degradation; CO(2) and NH(3) from urea (urease route): step 1/1. In Pseudomonas syringae pv. syringae (strain B728a), this protein is Urease subunit gamma.